Reading from the N-terminus, the 354-residue chain is S-adenosylmethionine:tRNA ribosyltransferase-isomerase (354 aa).

This sequence belongs to the QueA family. Monomer.

It localises to the cytoplasm. It carries out the reaction 7-aminomethyl-7-carbaguanosine(34) in tRNA + S-adenosyl-L-methionine = epoxyqueuosine(34) in tRNA + adenine + L-methionine + 2 H(+). It functions in the pathway tRNA modification; tRNA-queuosine biosynthesis. Transfers and isomerizes the ribose moiety from AdoMet to the 7-aminomethyl group of 7-deazaguanine (preQ1-tRNA) to give epoxyqueuosine (oQ-tRNA). In Azorhizobium caulinodans (strain ATCC 43989 / DSM 5975 / JCM 20966 / LMG 6465 / NBRC 14845 / NCIMB 13405 / ORS 571), this protein is S-adenosylmethionine:tRNA ribosyltransferase-isomerase.